We begin with the raw amino-acid sequence, 1461 residues long: Pleiotropic drug resistance protein 2 (1461 aa).

Residues 172-445 enclose the ABC transporter 1 domain; that stretch reads LGLIHLSPSK…FEYMGFRCPE (274 aa). ATP is bound at residue 205–212; sequence GPPGSGKT. The ABC transmembrane type-2 1 domain occupies 523 to 736; that stretch reads ELFKSCFTRE…GQNAIAINEF (214 aa). Transmembrane regions (helical) follow at residues 541 to 561, 577 to 597, 622 to 642, 660 to 680, 685 to 705, and 771 to 791; these read FLYIFKTTQITIMATIALTVF, FWGALFFSLINVMFNGMQELA, LPIWVLKIPISLVESAIWIIL, LLAFIGVHQMALSLFRFIAAA, VVANTLGTFTLLMVFILGGFI, and ISIGALFGFSLLFNVLFIAAL. One can recognise an ABC transporter 2 domain in the interval 859–1111; that stretch reads LAFNHVNYYV…KLVEYFETIP (253 aa). 904–911 serves as a coordination point for ATP; that stretch reads GVSGAGKT. The region spanning 1184–1398 is the ABC transmembrane type-2 2 domain; that stretch reads TQCKACFWKQ…TIYGIFASQV (215 aa). 7 consecutive transmembrane segments (helical) span residues 1203–1223, 1243–1263, 1291–1311, 1321–1341, 1348–1368, 1379–1399, and 1430–1450; these read YNAIRFFMTVIIGILFGVIFW, YAAVMFLGATNASAVQSVVAI, TIYVAIQTFVYSLLLFSMIGY, FYYFIFMCFTYFSMYGMMVVA, IAAIVMSFFLSFWNLFSGFLI, WYYWASPVAWTIYGIFASQVG, and FLLVVVFAHVGWVLLFFFVFA.

Belongs to the ABC transporter superfamily. ABCG family. PDR (TC 3.A.1.205) subfamily.

The protein resides in the membrane. Its function is as follows. May be a general defense protein. The sequence is that of Pleiotropic drug resistance protein 2 (PDR2) from Nicotiana plumbaginifolia (Leadwort-leaved tobacco).